Here is a 256-residue protein sequence, read N- to C-terminus: uncharacterized protein (256 aa).

The signal sequence occupies residues 1–24 (MIKRVNKLVLGISFLFLIISIFAG). A lipid anchor (N-palmitoyl cysteine) is attached at Cys25. Cys25 is lipidated: S-diacylglycerol cysteine.

It belongs to the staphylococcal tandem lipoprotein family.

The protein localises to the cell membrane. This is an uncharacterized protein from Staphylococcus aureus (strain Mu50 / ATCC 700699).